Consider the following 399-residue polypeptide: S-adenosylmethionine synthase (399 aa).

135–140 (GEGSTD) serves as a coordination point for ATP.

Belongs to the AdoMet synthase 2 family. Mg(2+) is required as a cofactor.

It carries out the reaction L-methionine + ATP + H2O = S-adenosyl-L-methionine + phosphate + diphosphate. The protein operates within amino-acid biosynthesis; S-adenosyl-L-methionine biosynthesis; S-adenosyl-L-methionine from L-methionine: step 1/1. Catalyzes the formation of S-adenosylmethionine from methionine and ATP. The protein is S-adenosylmethionine synthase (mat) of Archaeoglobus fulgidus (strain ATCC 49558 / DSM 4304 / JCM 9628 / NBRC 100126 / VC-16).